The chain runs to 220 residues: uncharacterized protein (220 aa).

Positions 1-50 (MTDDVRDVNTETTDATEVAEIDSAAGEAGDSATEAFDTDSATESTAQKGQ) are disordered. Residues 39–48 (DSATESTAQK) are compositionally biased toward polar residues. The helical transmembrane segment at 65-85 (VPVILILLMLISGGATGWLYL) threads the bilayer.

To M.tuberculosis Rv1363c.

The protein resides in the membrane. This is an uncharacterized protein from Mycobacterium tuberculosis (strain CDC 1551 / Oshkosh).